The primary structure comprises 755 residues: Dolichyl-phosphate-mannose--protein mannosyltransferase 4 (755 aa).

The tract at residues 1-23 is disordered; the sequence is MSQTLKKRGGNSSGRKSPTTSNI. An N-linked (GlcNAc...) asparagine glycan is attached at N11. Residues 13–23 are compositionally biased toward polar residues; that stretch reads SGRKSPTTSNI. 6 helical membrane-spanning segments follow: residues 92–112, 147–167, 185–205, 212–232, 237–257, and 278–298; these read FFDL…WLIG, IVPI…ACLF, ILLD…YSKF, SFSS…SCVI, VGVF…WILL, and ALII…FAIL. MIR domains follow at residues 325–389, 396–454, and 466–523; these read SKPV…IVPT, GTKV…LRLH, and KKEI…FDLI. N-linked (GlcNAc...) asparagine glycosylation is present at N445. 3 helical membrane passes run 595 to 615, 640 to 660, and 670 to 690; these read IFFI…SIYI, LYNT…PFFL, and YLPA…FICS. N691 carries an N-linked (GlcNAc...) asparagine glycan. Residues 706–726 traverse the membrane as a helical segment; sequence YKIIAVVAACSTAIIWFFFYF.

Belongs to the glycosyltransferase 39 family. Forms a functional homodimer.

It localises to the endoplasmic reticulum membrane. The catalysed reaction is a di-trans,poly-cis-dolichyl beta-D-mannosyl phosphate + L-seryl-[protein] = 3-O-(alpha-D-mannosyl)-L-seryl-[protein] + a di-trans,poly-cis-dolichyl phosphate + H(+). The enzyme catalyses a di-trans,poly-cis-dolichyl beta-D-mannosyl phosphate + L-threonyl-[protein] = 3-O-(alpha-D-mannosyl)-L-threonyl-[protein] + a di-trans,poly-cis-dolichyl phosphate + H(+). It functions in the pathway protein modification; protein glycosylation. Functionally, protein mannosyltransferase (PMT) involved in hyphal growth and drug sensitivity. Transfers mannose from Dol-P-mannose to Ser or Thr residues on proteins. PMT1, PMT2 and PMT4 account for most of the protein-O-glycosylation activity, while PMT5 and PMT6 may specifically modulate a much narrower spectrum of target proteins. Accounts for the O-glycosylation of AXL2, responsible for bud site selection, as well as of the SEC20 t-SNARE component. O-glycosylation of SEC20 is essential for its stability. Required for biofilm formation. The protein is Dolichyl-phosphate-mannose--protein mannosyltransferase 4 of Candida albicans (strain SC5314 / ATCC MYA-2876) (Yeast).